Consider the following 25-residue polypeptide: Plasticin-L1 (25 aa).

It belongs to the frog skin active peptide (FSAP) family. Plasticin subfamily. In terms of tissue distribution, expressed by the skin glands.

The protein resides in the secreted. Its subcellular location is the target cell membrane. Functionally, may play an immunomodulatory role in frog skin in response to microbial pathogens, since it increases the production of the pro-inflammatory cytokines TNF-alpha, IL-1 beta, IL-12, and IL-23 by mouse peritoneal macrophages and has no effect on the production of the anti-inflammatory cytokine IL-10. It is not known whether stimulation of cytokine production arises from a non-specific interaction of the peptide with the macrophage membrane or from interaction with a specific receptor. Shows a low activity in stimulating insulin release from rat BRIN-BD11 beta cells, and acts without loss of integrity of the plasma membrane. Shows a marked affinity for both neutral and anionic membranes models. Does not show antibacterial (E.coli and S.aureus). Does not show hemolytic activity against human erythrocytes. The sequence is that of Plasticin-L1 from Leptodactylus laticeps (Santa Fe frog).